The following is a 536-amino-acid chain: Probable tyrosyl-DNA phosphodiesterase (536 aa).

His-122 serves as the catalytic Nucleophile. Substrate is bound at residue Lys-124. The segment at 315–318 (SMGS) is interaction with DNA. The active-site Proton donor/acceptor is the His-401. Lys-403 lines the substrate pocket.

It belongs to the tyrosyl-DNA phosphodiesterase family.

The protein localises to the nucleus. Its function is as follows. DNA repair enzyme that can remove a variety of covalent adducts from DNA through hydrolysis of a 3'-phosphodiester bond, giving rise to DNA with a free 3' phosphate. Catalyzes the hydrolysis of dead-end complexes between DNA and the topoisomerase I active site tyrosine residue. Hydrolyzes 3'-phosphoglycolates on protruding 3' ends on DNA double-strand breaks due to DNA damage by radiation and free radicals. Acts on blunt-ended double-strand DNA breaks and on single-stranded DNA. May have low 3'exonuclease activity and may be able to remove a single nucleoside from the 3'end of DNA and RNA molecules with 3'hydroxyl groups. Has no exonuclease activity towards DNA or RNA with a 3'phosphate. The polypeptide is Probable tyrosyl-DNA phosphodiesterase (Schizosaccharomyces pombe (strain 972 / ATCC 24843) (Fission yeast)).